The chain runs to 1042 residues: Serine/threonine-protein kinase LATS2 (1042 aa).

The segment at 23-44 (REGLKQPSKASTQGLLVGPNSD) is disordered. The span at 30–44 (SKASTQGLLVGPNSD) shows a compositional bias: polar residues. Residue serine 82 is modified to Phosphoserine; by AURKA. A UBA domain is found at 97–138 (EVNRQMLQELVNAGCDQEMAGRALKQTGSRSIEAALEYISKM). The segment at 100 to 140 (RQMLQELVNAGCDQEMAGRALKQTGSRSIEAALEYISKMGY) is interaction with ubiquitinated AMOTL2. The segment at 237 to 282 (HFPGTHYGRGHLLSEQPGYGVQRSSSFQNKTPPDAYSSMAKAQGGP) is disordered. Polar residues predominate over residues 258–267 (QRSSSFQNKT). The residue at position 267 (threonine 267) is a Phosphothreonine. Residue serine 362 is modified to Phosphoserine. Disordered regions lie at residues 378–399 (RAGP…LPAP), 442–481 (PATE…HLLL), and 501–550 (QSLR…KRES). Positions 472 to 475 (PPPY) match the PPxY motif motif. The span at 507–530 (TEQDRSDKSHKGAKGDKAGRDKKQ) shows a compositional bias: basic and acidic residues. Phosphoserine is present on serine 534. The span at 541–550 (NSRDEEKRES) shows a compositional bias: basic and acidic residues. The Protein kinase domain occupies 626–931 (FVKIKTLGIG…ADDLKAHPFF (306 aa)). ATP-binding positions include 632–640 (LGIGAFGEV) and lysine 655. Aspartate 749 serves as the catalytic Proton acceptor. The AGC-kinase C-terminal domain maps to 932–1010 (NTIDFSRDIR…RRFFDDNGYP (79 aa)). Phosphothreonine is present on threonine 999. The interval 1014–1042 (PKPSEPAESADPGDADLEGAAEGCQPVYV) is disordered.

This sequence belongs to the protein kinase superfamily. AGC Ser/Thr protein kinase family. As to quaternary structure, interacts with and is phosphorylated by AURKA. Binds to AR. Interacts with AJUBA during mitosis and this complex regulates organization of the spindle apparatus through recruitment of gamma-tubulin to the centrosome. Interacts (via PPxY motif) with YAP1 (via WW domains). Interacts with MOB1A and MOB1B. Interacts with LIMD1, WTIP and AJUBA. Interacts with SNAI1. Interacts with WWC1, WWC2 and WWC3 (via their WW domains). Interacts (via UBA domain) with ubiquitinated AMOTL2; the interaction promotes LATS2 phosphorylation of YAP1. Mg(2+) is required as a cofactor. Post-translationally, autophosphorylated and phosphorylated during M-phase and the G1/S-phase of the cell cycle. Phosphorylated and activated by STK3/MST2. Phosphorylated by MAP4Ks; in parallel to STK3/MST2 and resulting to its activation. Phosphorylation by NUAK2 may regulate its activity in phosphorylation and inactivation YAP1. Expressed at high levels in ovary and testis and at lower levels in all other tissues examined.

The protein localises to the cytoplasm. It localises to the cytoskeleton. It is found in the microtubule organizing center. The protein resides in the centrosome. Its subcellular location is the spindle pole. The protein localises to the nucleus. It catalyses the reaction L-seryl-[protein] + ATP = O-phospho-L-seryl-[protein] + ADP + H(+). The enzyme catalyses L-threonyl-[protein] + ATP = O-phospho-L-threonyl-[protein] + ADP + H(+). In terms of biological role, negative regulator of YAP1 in the Hippo signaling pathway that plays a pivotal role in organ size control and tumor suppression by restricting proliferation and promoting apoptosis. The core of this pathway is composed of a kinase cascade wherein STK3/MST2 and STK4/MST1, in complex with its regulatory protein SAV1, phosphorylates and activates LATS1/2 in complex with its regulatory protein MOB1, which in turn phosphorylates and inactivates YAP1 oncoprotein and WWTR1/TAZ. Phosphorylation of YAP1 by LATS2 inhibits its translocation into the nucleus to regulate cellular genes important for cell proliferation, cell death, and cell migration. Also phosphorylates YAP1 in response to cell contact inhibition-driven WWP1 ubiquitination of AMOTL2, which results in LATS2 activation. Acts as a tumor suppressor which plays a critical role in centrosome duplication, maintenance of mitotic fidelity and genomic stability. Negatively regulates G1/S transition by down-regulating cyclin E/CDK2 kinase activity. Negative regulator of the androgen receptor. Phosphorylates SNAI1 in the nucleus leading to its nuclear retention and stabilization, which enhances its epithelial-mesenchymal transition and tumor cell invasion/migration activities. This tumor-promoting activity is independent of its effects upon YAP1 or WWTR1/TAZ. Acts as an activator of the NLRP3 inflammasome by mediating phosphorylation of 'Ser-265' of NLRP3 following NLRP3 palmitoylation, promoting NLRP3 activation by NEK7. The chain is Serine/threonine-protein kinase LATS2 from Mus musculus (Mouse).